The following is a 279-amino-acid chain: Shikimate dehydrogenase (NADP(+)) (279 aa).

Residues 14–16 and threonine 62 each bind shikimate; that span reads SLS. The active-site Proton acceptor is lysine 66. 2 residues coordinate shikimate: asparagine 87 and aspartate 103. Residues 127 to 131, 151 to 156, and methionine 215 each bind NADP(+); these read GAGGA and NRTKAK. Tyrosine 217 lines the shikimate pocket. Residue glycine 239 participates in NADP(+) binding.

It belongs to the shikimate dehydrogenase family. As to quaternary structure, homodimer.

It carries out the reaction shikimate + NADP(+) = 3-dehydroshikimate + NADPH + H(+). It functions in the pathway metabolic intermediate biosynthesis; chorismate biosynthesis; chorismate from D-erythrose 4-phosphate and phosphoenolpyruvate: step 4/7. Involved in the biosynthesis of the chorismate, which leads to the biosynthesis of aromatic amino acids. Catalyzes the reversible NADPH linked reduction of 3-dehydroshikimate (DHSA) to yield shikimate (SA). The chain is Shikimate dehydrogenase (NADP(+)) from Alteromonas mediterranea (strain DSM 17117 / CIP 110805 / LMG 28347 / Deep ecotype).